We begin with the raw amino-acid sequence, 465 residues long: MRFMQRSKDSLAKWLSAILPVVIVGLVGLFAVTVIRDYGRASEADRQALLEKGNVLIRALESGSRVGMGMRMHHVQQQALLEEMAGQPGVLWFAVTDAQGIIILHSDPDKVGRALYSPDEMQKLKPEENSRWRLLGKTETTPALEVYRLFQPMSAPWRHGMHNMPRCNGKAVPQVDAQQAIFIAVDASDLVATQSGEKRNTLIILFALATVLLASVLSFFWYRRYLRSRQLLQDEMKRKEKLVALGHLAAGVAHEIRNPLSSIKGLAKYFAERAPAGGEAHQLAQVMAKEADRLNRVVSELLELVKPTHLALQAVDLNTLINHSLQLVSQDANSREIQLRFTANDTLPEIQADPDRLTQVLLNLYLNAIQAIGQHGVISVTASESGAGVKISVTDSGKGIAADQLDAIFTPYFTTKAEGTGLGLAVVHNIVEQHGGTIQVASQEGKGSTFTLWLPVNITRKDPQG.

Over 1–14 (MRFMQRSKDSLAKW) the chain is Cytoplasmic. The helical transmembrane segment at 15–35 (LSAILPVVIVGLVGLFAVTVI) threads the bilayer. At 36 to 201 (RDYGRASEAD…ATQSGEKRNT (166 aa)) the chain is on the periplasmic side. Residues 202 to 222 (LIILFALATVLLASVLSFFWY) traverse the membrane as a helical segment. Topologically, residues 223–465 (RRYLRSRQLL…VNITRKDPQG (243 aa)) are cytoplasmic. The region spanning 251-458 (GVAHEIRNPL…TFTLWLPVNI (208 aa)) is the Histidine kinase domain. The residue at position 254 (His254) is a Phosphohistidine; by autocatalysis.

In terms of processing, autophosphorylated.

Its subcellular location is the cell inner membrane. The enzyme catalyses ATP + protein L-histidine = ADP + protein N-phospho-L-histidine.. Its activity is regulated as follows. Activity of the ZraS/ZraR two-component system is repressed by the zinc-bound form of ZraP, which probably interacts with the periplasmic region of ZraS. Its function is as follows. Part of the Zra signaling pathway, an envelope stress response (ESR) system composed of the periplasmic accessory protein ZraP, the histidine kinase ZraS and the transcriptional regulator ZraR. The ZraPSR system contributes to antibiotic resistance and is important for membrane integrity in the presence of membrane-targeting biocides. ZraS is a member of the two-component regulatory system ZraS/ZraR. Functions as a membrane-associated sensor kinase that phosphorylates ZraR in response to high concentrations of Zn(2+) or Pb(2+) in the medium. Binds one zinc molecule with high affinity via its periplasmic domain, inducing a conformational change that is transmitted to the histidine kinase domain and leads to the activation of ZraR. The system has no direct role in zinc or copper resistance. This is Sensor histidine kinase ZraS from Escherichia coli (strain K12).